Consider the following 300-residue polypeptide: 4-diphosphocytidyl-2-C-methyl-D-erythritol kinase (300 aa).

Residue Lys17 is part of the active site. 102–112 (PVAAGIGGGSA) is a binding site for ATP. Asp144 is a catalytic residue.

It belongs to the GHMP kinase family. IspE subfamily.

It catalyses the reaction 4-CDP-2-C-methyl-D-erythritol + ATP = 4-CDP-2-C-methyl-D-erythritol 2-phosphate + ADP + H(+). It participates in isoprenoid biosynthesis; isopentenyl diphosphate biosynthesis via DXP pathway; isopentenyl diphosphate from 1-deoxy-D-xylulose 5-phosphate: step 3/6. Functionally, catalyzes the phosphorylation of the position 2 hydroxy group of 4-diphosphocytidyl-2C-methyl-D-erythritol. The protein is 4-diphosphocytidyl-2-C-methyl-D-erythritol kinase of Bradyrhizobium sp. (strain ORS 278).